Reading from the N-terminus, the 488-residue chain is MELLREAKPYTKDKLKTNLIEWFHWLLREAELYDVRYPVKGAYVWRPYGMKLRRNVENLIRRIHDETGHEEVLFPVFIPYEFFSKESQHIRGFEKEVFWVSKGGEGGERLILRPTSETAIMPMVKLWIQDYKDLPLRLYQIVSVFRAETKMTHPMIRLREISMFKEAHTVHATREDAERQIREAVEIYKRIFDEMCLAYMINKRPNWDKFAGAEYTIAFDTILPDGRTLQIGTVHYLGVNFTKVFEVTYLDIDGTRKLAHTTSYGISERSIAAMLITHGDDGGTTLPPKLAPIQVVIVPIFYGEEEMPTVMKFVDEVYRMLRDVGIRIHIDDRRDKTPGWKFYYWELKGVPLRIEVGRRDIEKRQVVVTRRDTLEKYAVSLGELVDAVKQLMSVVEDNLRKRAWEDLRNRLVKVEKVEDAKNAIREGKVVEVPWSGDDECGVKLQELVGADALGIPMDTDPSIGGFDMRDLACKEKRAEFWLRLSERY.

The protein belongs to the class-II aminoacyl-tRNA synthetase family. ProS type 3 subfamily. As to quaternary structure, homodimer.

It is found in the cytoplasm. It carries out the reaction tRNA(Pro) + L-proline + ATP = L-prolyl-tRNA(Pro) + AMP + diphosphate. Functionally, catalyzes the attachment of proline to tRNA(Pro) in a two-step reaction: proline is first activated by ATP to form Pro-AMP and then transferred to the acceptor end of tRNA(Pro). The sequence is that of Proline--tRNA ligase from Pyrobaculum islandicum (strain DSM 4184 / JCM 9189 / GEO3).